A 1185-amino-acid chain; its full sequence is Calmodulin-binding transcription activator homolog 1 (1185 aa).

Residues 72–200 (AVELFPCFKD…YLNVKTNNKI (129 aa)) constitute a DNA-binding region (CG-1). Disordered stretches follow at residues 252–277 (GVNL…RRNS) and 390–411 (KIRS…VTST). A compositionally biased stretch (low complexity) spans 393–411 (SGSQESPMGPPSSSSVTST). The IPT/TIG domain occupies 418-498 (EMTPSSSSLK…ISTASEFTYE (81 aa)). An ANK repeat occupies 616–646 (DGSTPLHTACKNSASRIARLIISIDSSAIDV). The 28-residue stretch at 957 to 984 (EAAMVIQRAYRVYRARSTTRRQEDIERR) folds into the IQ domain. A disordered region spans residues 1121 to 1185 (CPQTSGDQRN…KPPYGCGTLA (65 aa)). Over residues 1128–1147 (QRNKRDSDGERKRDAHHDAP) the composition is skewed to basic and acidic residues.

Belongs to the CAMTA family. May interact with calmodulin. As to expression, expressed broadly in the nervous system.

The protein resides in the nucleus. In terms of biological role, transcription factor. Positively modulates neuronal levels of the ubiquitous Ca2+ sensor calmodulin/cmd-1, probably by direct binding to the cmd-1 promoter, thereby regulating Ca2+ signaling, physiology, and behavior. The chain is Calmodulin-binding transcription activator homolog 1 from Caenorhabditis elegans.